A 157-amino-acid polypeptide reads, in one-letter code: Endoribonuclease YbeY (157 aa).

Residues H112, H116, and H122 each contribute to the Zn(2+) site.

The protein belongs to the endoribonuclease YbeY family. Zn(2+) is required as a cofactor.

The protein resides in the cytoplasm. Functionally, single strand-specific metallo-endoribonuclease involved in late-stage 70S ribosome quality control and in maturation of the 3' terminus of the 16S rRNA. The polypeptide is Endoribonuclease YbeY (Marinobacter nauticus (strain ATCC 700491 / DSM 11845 / VT8) (Marinobacter aquaeolei)).